Here is a 299-residue protein sequence, read N- to C-terminus: Nitrogenase iron protein (299 aa).

An ATP-binding site is contributed by 11 to 18; that stretch reads GKGGIGKS. C99 lines the [4Fe-4S] cluster pocket. At R102 the chain carries ADP-ribosylarginine; by dinitrogenase reductase ADP-ribosyltransferase. C133 contacts [4Fe-4S] cluster.

It belongs to the NifH/BchL/ChlL family. As to quaternary structure, homodimer. Requires [4Fe-4S] cluster as cofactor. The reversible ADP-ribosylation of Arg-102 inactivates the nitrogenase reductase and regulates nitrogenase activity.

The enzyme catalyses N2 + 8 reduced [2Fe-2S]-[ferredoxin] + 16 ATP + 16 H2O = H2 + 8 oxidized [2Fe-2S]-[ferredoxin] + 2 NH4(+) + 16 ADP + 16 phosphate + 6 H(+). Its function is as follows. The key enzymatic reactions in nitrogen fixation are catalyzed by the nitrogenase complex, which has 2 components: the iron protein and the molybdenum-iron protein. The sequence is that of Nitrogenase iron protein from Methylobacterium nodulans (strain LMG 21967 / CNCM I-2342 / ORS 2060).